We begin with the raw amino-acid sequence, 162 residues long: MRISKPHLRSISIQCYLCLLLNSHFLTEAGIHVFILGCFSAGLPKTEANWVNVISDLKKIEDLIQSMHIDATLYTESDVHPSCKVTAMKCFLLELQVISLESGDASIHDTVENLIILANNSLSSNGNVTESGCKECEELEEKNIKEFLQSFVHIVQMFINTS.

The N-terminal stretch at 1 to 29 (MRISKPHLRSISIQCYLCLLLNSHFLTEA) is a signal peptide. A propeptide spanning residues 30 to 48 (GIHVFILGCFSAGLPKTEA) is cleaved from the precursor. 2 cysteine pairs are disulfide-bonded: Cys-83/Cys-133 and Cys-90/Cys-136. The N-linked (GlcNAc...) asparagine glycan is linked to Asn-127.

The protein belongs to the IL-15/IL-21 family. As to expression, most abundant in placenta and skeletal muscle. It is also detected in the heart, lung, liver and kidney. IL15-S21AA is preferentially expressed in tissues such as testis and thymus.

The protein localises to the secreted. It localises to the cytoplasm. It is found in the nucleus. In terms of biological role, cytokine that plays a major role in the development of inflammatory and protective immune responses to microbial invaders and parasites by modulating immune cells of both the innate and adaptive immune systems. Stimulates the proliferation of natural killer cells, T-cells and B-cells and promotes the secretion of several cytokines. In monocytes, induces the production of IL8 and monocyte chemotactic protein 1/CCL2, two chemokines that attract neutrophils and monocytes respectively to sites of infection. Unlike most cytokines, which are secreted in soluble form, IL15 is expressed in association with its high affinity IL15RA on the surface of IL15-producing cells and delivers signals to target cells that express IL2RB and IL2RG receptor subunits. Binding to its receptor triggers the phosphorylation of JAK1 and JAK3 and the recruitment and subsequent phosphorylation of signal transducer and activator of transcription-3/STAT3 and STAT5. In mast cells, induces the rapid tyrosine phosphorylation of STAT6 and thereby controls mast cell survival and release of cytokines such as IL4. This is Interleukin-15 (IL15) from Homo sapiens (Human).